The chain runs to 445 residues: MEEVWLQAQSNLAKVLTHQTFNTWIEPIKYLGSKKNVLLLEAPNQFVRDRVSESYLPMILESVQSLTDSQTKIELLIAKPKTEKPKQPAASEVTAAEPEACSGPDHSTNLNPKYTFDTFVCGGSNQFAHAAAQSVANSPAGKYNPLFIYGGVGLGKTHLLNAIGNHVLSVNRKARICFYTSEKFMNELINCLRYQKMDQFRNKFRKMDILLIDDIQFIAGKERTQEEFFHTFNSLYESHKQIVVTSDKFPKDIPGLEERLRSRFEWGLIADIQAPDTETKVAILRKKADADHISLPDDVALFLASSSTTNVRELEGMLIRLGAVSSLTGKNITLDMAREVLKDIIVDKSKEITVEMIQKFVAEHFSLKVADLKSDKRLKALVIPRQIAIFLCRDLTKSSYPEIGERFGGKDHSTIIHSVKKVEKLLSQDFELRNTVDTLRKGLLS.

Residues Met-1 to Thr-71 are domain I, interacts with DnaA modulators. The segment at Thr-71–Thr-108 is domain II. The interval Glu-83 to His-106 is disordered. Residues Asn-109 to Ser-325 are domain III, AAA+ region. ATP contacts are provided by Gly-153, Gly-155, Lys-156, and Thr-157. The tract at residues Ser-326–Ser-445 is domain IV, binds dsDNA.

This sequence belongs to the DnaA family. As to quaternary structure, oligomerizes as a right-handed, spiral filament on DNA at oriC.

The protein resides in the cytoplasm. In terms of biological role, plays an essential role in the initiation and regulation of chromosomal replication. ATP-DnaA binds to the origin of replication (oriC) to initiate formation of the DNA replication initiation complex once per cell cycle. Binds the DnaA box (a 9 base pair repeat at the origin) and separates the double-stranded (ds)DNA. Forms a right-handed helical filament on oriC DNA; dsDNA binds to the exterior of the filament while single-stranded (ss)DNA is stabiized in the filament's interior. The ATP-DnaA-oriC complex binds and stabilizes one strand of the AT-rich DNA unwinding element (DUE), permitting loading of DNA polymerase. After initiation quickly degrades to an ADP-DnaA complex that is not apt for DNA replication. Binds acidic phospholipids. The chain is Chromosomal replication initiator protein DnaA from Geobacter sulfurreducens (strain ATCC 51573 / DSM 12127 / PCA).